A 528-amino-acid polypeptide reads, in one-letter code: Tyrosine--tRNA ligase, cytoplasmic (528 aa).

L-tyrosine is bound at residue Tyr39. A 'HIGH' region motif is present at residues 44 to 52 (TTGKPHVAY). Residues Tyr166, Gln170, Asp173, and Gln188 each coordinate L-tyrosine. The short motif at 222–226 (KMSSS) is the 'KMSKS' region element. A Nuclear localization signal motif is present at residues 242–247 (KKKLKK). Residues 335 to 364 (KLSNDAYPGASKQKTVPKGSTKNSGPEEID) form a disordered region. Polar residues predominate over residues 346–358 (KQKTVPKGSTKNS). The tRNA-binding domain maps to 364-468 (DPSLLDLRVG…TGSAPGERIY (105 aa)).

Belongs to the class-I aminoacyl-tRNA synthetase family. In terms of assembly, homodimer.

Its subcellular location is the cytoplasm. It is found in the nucleus. The catalysed reaction is tRNA(Tyr) + L-tyrosine + ATP = L-tyrosyl-tRNA(Tyr) + AMP + diphosphate + H(+). Its function is as follows. Catalyzes the attachment of tyrosine to tRNA(Tyr) in a two-step reaction: tyrosine is first activated by ATP to form Tyr-AMP and then transferred to the acceptor end of tRNA(Tyr). The chain is Tyrosine--tRNA ligase, cytoplasmic (yars1) from Xenopus tropicalis (Western clawed frog).